The sequence spans 342 residues: L-threonine 3-dehydrogenase (342 aa).

A Zn(2+)-binding site is contributed by C38. Catalysis depends on charge relay system residues T40 and H43. Residues H63, E64, C93, C96, C99, and C107 each coordinate Zn(2+). NAD(+) contacts are provided by residues I175, D195, R200, 262–264 (LGI), and 286–287 (IY).

This sequence belongs to the zinc-containing alcohol dehydrogenase family. As to quaternary structure, homotetramer. It depends on Zn(2+) as a cofactor.

Its subcellular location is the cytoplasm. It carries out the reaction L-threonine + NAD(+) = (2S)-2-amino-3-oxobutanoate + NADH + H(+). The protein operates within amino-acid degradation; L-threonine degradation via oxydo-reductase pathway; glycine from L-threonine: step 1/2. In terms of biological role, catalyzes the NAD(+)-dependent oxidation of L-threonine to 2-amino-3-ketobutyrate. The sequence is that of L-threonine 3-dehydrogenase from Paraburkholderia phymatum (strain DSM 17167 / CIP 108236 / LMG 21445 / STM815) (Burkholderia phymatum).